We begin with the raw amino-acid sequence, 876 residues long: MAP7 domain-containing protein 3 (876 aa).

Disordered regions lie at residues 30–139 (AEER…KFKA), 162–200 (GGVM…VDNT), and 402–438 (TEAP…IDKR). Polar residues predominate over residues 39–54 (INSSAGANKRSSSTPD). A coiled-coil region spans residues 58 to 136 (LKNDVKQQLA…KQKQAEDTEK (79 aa)). 2 stretches are compositionally biased toward basic and acidic residues: residues 60-139 (NDVK…KFKA) and 169-196 (KSGK…DMQH). Phosphoserine occurs at positions 417 and 483. Coiled-coil stretches lie at residues 549–578 (IQIR…IARK) and 626–658 (SAMM…RRKA). Disordered regions lie at residues 558–683 (QSKN…EIFP) and 742–783 (IQGK…NPNH). Basic and acidic residues-rich tracts occupy residues 559–590 (SKNE…DKVP) and 630–659 (KSRD…RKAS). The segment covering 665–679 (SEDEADDEGESEDSL) has biased composition (acidic residues). A compositionally biased stretch (basic residues) spans 750-763 (SAKKPPTRPIRSRK). Residues 771-782 (IRPTQSASSNPN) are compositionally biased toward polar residues.

Belongs to the MAP7 family. High expression in lung, skeletal muscle, brain, and kidney, with much weaker expression in spleen, small intestine, liver, and heart.

It localises to the cytoplasm. Its subcellular location is the cytoskeleton. The protein localises to the spindle. In terms of biological role, promotes the assembly and stability of microtubules. This is MAP7 domain-containing protein 3 (Map7d3) from Mus musculus (Mouse).